The primary structure comprises 874 residues: Alanine--tRNA ligase (874 aa).

Zn(2+) is bound by residues His564, His568, Cys665, and His669.

This sequence belongs to the class-II aminoacyl-tRNA synthetase family. Zn(2+) is required as a cofactor.

It localises to the cytoplasm. It catalyses the reaction tRNA(Ala) + L-alanine + ATP = L-alanyl-tRNA(Ala) + AMP + diphosphate. In terms of biological role, catalyzes the attachment of alanine to tRNA(Ala) in a two-step reaction: alanine is first activated by ATP to form Ala-AMP and then transferred to the acceptor end of tRNA(Ala). Also edits incorrectly charged Ser-tRNA(Ala) and Gly-tRNA(Ala) via its editing domain. This chain is Alanine--tRNA ligase, found in Delftia acidovorans (strain DSM 14801 / SPH-1).